The primary structure comprises 410 residues: FAS1 domain-containing protein CaO19.3004 (410 aa).

A signal peptide spans 1-18 (MKLSKLLQLAVFSSLVTS). Composition is skewed to basic and acidic residues over residues 64–73 (NAKFKRDPKN) and 83–96 (GSAE…REPK). The disordered stretch occupies residues 64–98 (NAKFKRDPKNVIDPASLKEGSAEEEQKDKREPKNL). An FAS1 domain is found at 247–407 (NNLLQSILPQ…GFVLIINDSL (161 aa)).

It is found in the vacuole. In Candida albicans (strain SC5314 / ATCC MYA-2876) (Yeast), this protein is FAS1 domain-containing protein CaO19.3004.